The chain runs to 255 residues: tRNA (guanine-N(7)-)-methyltransferase (255 aa).

S-adenosyl-L-methionine contacts are provided by Glu-86, Glu-111, Asp-138, and Asp-161. Asp-161 is a catalytic residue. Residues Lys-165, Asp-197, and 234–237 (TKFE) contribute to the substrate site.

Belongs to the class I-like SAM-binding methyltransferase superfamily. TrmB family.

It carries out the reaction guanosine(46) in tRNA + S-adenosyl-L-methionine = N(7)-methylguanosine(46) in tRNA + S-adenosyl-L-homocysteine. Its pathway is tRNA modification; N(7)-methylguanine-tRNA biosynthesis. In terms of biological role, catalyzes the formation of N(7)-methylguanine at position 46 (m7G46) in tRNA. This is tRNA (guanine-N(7)-)-methyltransferase from Pasteurella multocida (strain Pm70).